Reading from the N-terminus, the 405-residue chain is MTDSEPQTLNNNSEITASHNDDILEYLSVDDYDYELPDQLIARYPLAQRSASKLLYLRANNANSQVEVEDKLFSELPELLNAGDLIVFNDTKVMKARLFGQKDTGGKIEVLIERLVALSDLNSADLDTITSNSDIIDMTVIAEKHIALCHVKASKALKLGQGLVLADGHMTGVMIGRQENLFILAFDTPILPDLELYGELPIPPYFERHADATDNTRYQTVFHDPAKLASVAAPTASLHFDDIVLEKLAAKGIQTAFVTLHVGAGTFAPVKTENLLNHTMHSEYAHLPQATADLINQTHANGKQVIAIGTTVTRVLETAYQQTAVDRQPLSGWAGDTEIFIYPGFEFGVVDKLLTNFHLPKSTLLMLVSAFATKKSIEEAYQHAIESEYRFFSYGDAMLLDKKVD.

It belongs to the QueA family. In terms of assembly, monomer.

It localises to the cytoplasm. It catalyses the reaction 7-aminomethyl-7-carbaguanosine(34) in tRNA + S-adenosyl-L-methionine = epoxyqueuosine(34) in tRNA + adenine + L-methionine + 2 H(+). Its pathway is tRNA modification; tRNA-queuosine biosynthesis. Its function is as follows. Transfers and isomerizes the ribose moiety from AdoMet to the 7-aminomethyl group of 7-deazaguanine (preQ1-tRNA) to give epoxyqueuosine (oQ-tRNA). The polypeptide is S-adenosylmethionine:tRNA ribosyltransferase-isomerase (Psychrobacter cryohalolentis (strain ATCC BAA-1226 / DSM 17306 / VKM B-2378 / K5)).